Consider the following 462-residue polypeptide: Asparagine--tRNA ligase (462 aa).

This sequence belongs to the class-II aminoacyl-tRNA synthetase family. As to quaternary structure, homodimer.

The protein localises to the cytoplasm. The catalysed reaction is tRNA(Asn) + L-asparagine + ATP = L-asparaginyl-tRNA(Asn) + AMP + diphosphate + H(+). This chain is Asparagine--tRNA ligase, found in Borrelia garinii subsp. bavariensis (strain ATCC BAA-2496 / DSM 23469 / PBi) (Borreliella bavariensis).